The following is a 216-amino-acid chain: Pyridoxine/pyridoxamine 5'-phosphate oxidase (216 aa).

FMN is bound by residues 63-68 (RMVLMK), 78-79 (YS), lysine 85, and glutamine 107. Lysine 68 contacts substrate. 2 residues coordinate substrate: tyrosine 125 and arginine 129. FMN contacts are provided by residues 142–143 (QS) and tryptophan 187. Substrate is bound at residue 193-195 (RLH). FMN is bound at residue arginine 197.

It belongs to the pyridoxamine 5'-phosphate oxidase family. In terms of assembly, homodimer. It depends on FMN as a cofactor.

It catalyses the reaction pyridoxamine 5'-phosphate + O2 + H2O = pyridoxal 5'-phosphate + H2O2 + NH4(+). The catalysed reaction is pyridoxine 5'-phosphate + O2 = pyridoxal 5'-phosphate + H2O2. The protein operates within cofactor metabolism; pyridoxal 5'-phosphate salvage; pyridoxal 5'-phosphate from pyridoxamine 5'-phosphate: step 1/1. Its pathway is cofactor metabolism; pyridoxal 5'-phosphate salvage; pyridoxal 5'-phosphate from pyridoxine 5'-phosphate: step 1/1. Catalyzes the oxidation of either pyridoxine 5'-phosphate (PNP) or pyridoxamine 5'-phosphate (PMP) into pyridoxal 5'-phosphate (PLP). In Bradyrhizobium sp. (strain BTAi1 / ATCC BAA-1182), this protein is Pyridoxine/pyridoxamine 5'-phosphate oxidase.